Consider the following 1591-residue polypeptide: GATOR1 complex protein DEPDC5 (1591 aa).

Disordered stretches follow at residues 427–455 (GKKS…TLPI), 478–532 (LATC…STNI), and 695–720 (LSNS…STSP). The segment covering 430 to 439 (SASEKTKNGR) has biased composition (basic and acidic residues). Over residues 494 to 508 (SASSCDVSSSPSLPS) the composition is skewed to low complexity. S505 is subject to Phosphoserine. Over residues 518–532 (SQASDDSSLGKSTNI) the composition is skewed to polar residues. S992 carries the phosphoserine modification. 2 disordered regions span residues 1040–1064 (SQKS…ENSS) and 1118–1153 (STGQ…SSQQ). Residues 1118–1149 (STGQPMDRGNNQTFGNSQNIEQAFPSANSGDY) show a composition bias toward polar residues. Residues 1175-1250 (PSTGVQLLSE…YGFYFYKIVM (76 aa)) form the DEP domain. Residue S1518 is modified to Phosphoserine.

This sequence belongs to the IML1 family. In terms of assembly, within the GATOR complex, component of the GATOR1 subcomplex, made of DEPDC5, NPRL2 and NPRL3. GATOR1 mediates the strong interaction of the GATOR complex with small GTPases Rag (RagA/RRAGA, RagB/RRAGB, RagC/RRAGC and/or RagD/RRAGD) heterodimers. GATOR1 interacts with GPR155/LYCHOS; interaction takes place in presence of cholesterol and prevents interaction between GATOR1 and KICSTOR. Interacts with SAMTOR; interaction is direct and takes place in presence of methionine, leading to inhibit the activity of the GATOR1 complex. In terms of processing, phosphorylation at Ser-992 and Ser-1518 by AKT1 and PIM1 inhibit the activity of DEPDC5, releasing inhibition of the mTORC1 pathway. Post-translationally, ubiquitinated. Amino acid-induced 'Lys-48'-linked polyubiquitination of DEPDC5 by the BCR(KLHL22) ubiquitin ligase complex leads to DEPDC5 proteasomal degradation and inhibition of the GATOR1 complex. Ubiquitination may occur at multiple lysines. Expressed at low levels in all brain regions. Expressed throughout brain development, including in midgestation embryonic head (11.5 dpc), neonatal brain and whole adult brain. Present in neurons and absent in non-neuronal cells, including astrocytes (at protein level).

The protein localises to the lysosome membrane. It is found in the cytoplasm. The protein resides in the cytosol. Its subcellular location is the perinuclear region. Functionally, as a component of the GATOR1 complex functions as an inhibitor of the amino acid-sensing branch of the mTORC1 pathway. In response to amino acid depletion, the GATOR1 complex has GTPase activating protein (GAP) activity and strongly increases GTP hydrolysis by RagA/RRAGA (or RagB/RRAGB) within heterodimeric Rag complexes, thereby turning them into their inactive GDP-bound form, releasing mTORC1 from lysosomal surface and inhibiting mTORC1 signaling. In the presence of abundant amino acids, the GATOR1 complex is negatively regulated by GATOR2, the other GATOR subcomplex, in this amino acid-sensing branch of the TORC1 pathway. Within the GATOR1 complex, DEPDC5 mediates direct interaction with the nucleotide-binding pocket of small GTPases Rag (RagA/RRAGA, RagB/RRAGB, RagC/RRAGC and/or RagD/RRAGD) and coordinates their nucleotide loading states by promoting RagA/RRAGA or RagB/RRAGB into their GDP-binding state and RagC/RRAGC or RagD/RRAGD into their GTP-binding state. However, it does not execute the GAP activity, which is mediated by NPRL2. The protein is GATOR1 complex protein DEPDC5 of Mus musculus (Mouse).